Consider the following 1203-residue polypeptide: Partitioning defective 3 homolog B (1203 aa).

2 disordered regions span residues 79–104 (FDEQ…PDAF) and 138–162 (RRSS…SGQS). Ser100 is modified (phosphoserine). Residues 152 to 162 (QPSTASLSGQS) are compositionally biased toward polar residues. The 89-residue stretch at 201 to 289 (TRAVEISGEG…SPSVILHVLL (89 aa)) folds into the PDZ 1 domain. Residues 334-374 (TRASSPEGEEPASPQQSKSPRVPRLGRKPSSPSLSPLMGFG) form a disordered region. Phosphoserine is present on residues Ser346, Ser352, and Ser368. 2 PDZ domains span residues 383-468 (KIDL…VIAR) and 496-585 (TLEI…GMIQ). Residues Ser635, Ser710, Ser728, Ser730, Ser746, Ser749, and Ser801 each carry the phosphoserine modification. The segment covering 718–732 (GKVQSLADRRSDSPG) has biased composition (basic and acidic residues). The segment at 718-743 (GKVQSLADRRSDSPGKDFGPTLGLKK) is disordered. 3 disordered regions span residues 787-927 (KSYD…EKQA), 968-994 (VFRS…PDHL), and 1050-1203 (RPSD…TAAV). Phosphothreonine is present on Thr810. A compositionally biased stretch (basic and acidic residues) spans 827-842 (VENKAKNIKKTKEKEK). Over residues 843–854 (KKGKGKLKVKEK) the composition is skewed to basic residues. 4 stretches are compositionally biased toward basic and acidic residues: residues 855–865 (KLKEEHEDAER), 881–893 (KKDD…EQKG), 906–927 (ERMK…EKQA), and 984–994 (RDGRPLSPDHL). Phosphoserine is present on residues Ser1088 and Ser1182.

The protein belongs to the PAR3 family. In terms of assembly, interacts with PARD6B. Interacts with INSC/inscuteable.

The protein resides in the endomembrane system. Its subcellular location is the cell junction. It is found in the tight junction. Functionally, putative adapter protein involved in asymmetrical cell division and cell polarization processes. May play a role in the formation of epithelial tight junctions. This is Partitioning defective 3 homolog B (Pard3b) from Mus musculus (Mouse).